The primary structure comprises 135 residues: Large ribosomal subunit protein uL16c (135 aa).

The protein belongs to the universal ribosomal protein uL16 family. As to quaternary structure, part of the 50S ribosomal subunit.

The protein localises to the plastid. It is found in the chloroplast. This is Large ribosomal subunit protein uL16c from Acorus calamus var. americanus (American sweet flag).